A 574-amino-acid polypeptide reads, in one-letter code: Amino-acid acetyltransferase, mitochondrial (574 aa).

The transit peptide at 1–13 directs the protein to the mitochondrion; it reads MWRRIFAHGLKYD. The region spanning 392–560 is the N-acetyltransferase domain; that stretch reads KGAKPSNNSP…KRLREFMRSV (169 aa).

Belongs to the acetyltransferase family. Interacts with the acetylglutamate kinase chain of AGR5,6.

The protein localises to the mitochondrion. It catalyses the reaction L-glutamate + acetyl-CoA = N-acetyl-L-glutamate + CoA + H(+). It functions in the pathway amino-acid biosynthesis; L-arginine biosynthesis; N(2)-acetyl-L-ornithine from L-glutamate: step 1/4. With respect to regulation, feedback inhibition by L-arginine. N-acetylglutamate synthase involved in arginine biosynthesis. This Saccharomyces cerevisiae (strain YJM789) (Baker's yeast) protein is Amino-acid acetyltransferase, mitochondrial (ARG2).